Reading from the N-terminus, the 515-residue chain is Putative ribose/galactose/methyl galactoside import ATP-binding protein (515 aa).

ABC transporter domains follow at residues 26-262 (LEVA…VGRE) and 272-511 (VALG…KIMD). 58-65 (GENGAGKS) is a binding site for ATP.

The protein belongs to the ABC transporter superfamily. Carbohydrate importer 2 (CUT2) (TC 3.A.1.2) family.

Its subcellular location is the cell inner membrane. It carries out the reaction D-ribose(out) + ATP + H2O = D-ribose(in) + ADP + phosphate + H(+). The enzyme catalyses D-galactose(out) + ATP + H2O = D-galactose(in) + ADP + phosphate + H(+). In terms of biological role, part of an ABC transporter complex involved in carbohydrate import. Could be involved in ribose, galactose and/or methyl galactoside import. Responsible for energy coupling to the transport system. This chain is Putative ribose/galactose/methyl galactoside import ATP-binding protein, found in Hahella chejuensis (strain KCTC 2396).